Here is a 1139-residue protein sequence, read N- to C-terminus: Integrin alpha ina-1 (1139 aa).

The first 19 residues, 1 to 19, serve as a signal peptide directing secretion; the sequence is MRECIISWTLLLCLSCVKS. Residues 20–1084 are Extracellular-facing; sequence FNLDVNAPIY…PTIGDSRPIP (1065 aa). The stretch at 21–85 is one FG-GAP 1 repeat; sequence NLDVNAPIYR…CDINTFYNGG (65 aa). Residues Asn108 and Asn136 are each glycosylated (N-linked (GlcNAc...) asparagine). FG-GAP repeat units follow at residues 111–171, 180–231, 242–302, 307–370, 378–438, and 448–510; these read RGRT…LQST, LPTT…IFDS, NGDM…SSSK, EDKF…QRKQ, HPPK…IEKF, and GNDL…MEKR. A glycan (N-linked (GlcNAc...) asparagine) is linked at Asn313. 4 N-linked (GlcNAc...) asparagine glycosylation sites follow: Asn580, Asn788, Asn851, and Asn1026. The chain crosses the membrane as a helical span at residues 1085-1106; sequence WWIYVIAAVIGVLILSLIIICL. Residues 1107 to 1139 lie on the Cytoplasmic side of the membrane; sequence SKCGFFKRNRLDQPSLYTAQLKHEREEWADTGL.

This sequence belongs to the integrin alpha chain family. Heterodimer of an alpha and a beta subunit. Alpha ina-1 associates with beta pat-3. Interacts (via cytoplasmic domain) with src-1 (when phosphorylated at 'Tyr-416').

The protein localises to the membrane. The protein resides in the cell projection. It is found in the phagocytic cup. It localises to the cytoplasmic vesicle. Its subcellular location is the phagosome membrane. Functionally, plays a role in cell migration, axon fasciculation, and morphogenesis. During gonad morphogenesis, involved in distal tip cell (DTC)-mediated guidance of gonad elongation, in maintaining their sharp tapering morphology and in their migration. Involved in the anterior-posterior positioning of QR neuroblast descendants by regulating the migratory speed of QR.p. Probably by acting as a receptor for apoptotic cells, plays a role in the clearance of apoptotic cells during mid-embryogenesis. This Caenorhabditis elegans protein is Integrin alpha ina-1 (ina-1).